The chain runs to 290 residues: 4-hydroxy-tetrahydrodipicolinate synthase (290 aa).

Residue Thr44 participates in pyruvate binding. The active-site Proton donor/acceptor is the Tyr132. Lys160 acts as the Schiff-base intermediate with substrate in catalysis. Residue Ile202 coordinates pyruvate.

Belongs to the DapA family. As to quaternary structure, homotetramer; dimer of dimers.

The protein resides in the cytoplasm. It carries out the reaction L-aspartate 4-semialdehyde + pyruvate = (2S,4S)-4-hydroxy-2,3,4,5-tetrahydrodipicolinate + H2O + H(+). Its pathway is amino-acid biosynthesis; L-lysine biosynthesis via DAP pathway; (S)-tetrahydrodipicolinate from L-aspartate: step 3/4. Functionally, catalyzes the condensation of (S)-aspartate-beta-semialdehyde [(S)-ASA] and pyruvate to 4-hydroxy-tetrahydrodipicolinate (HTPA). The polypeptide is 4-hydroxy-tetrahydrodipicolinate synthase (Cereibacter sphaeroides (strain ATCC 17025 / ATH 2.4.3) (Rhodobacter sphaeroides)).